A 365-amino-acid chain; its full sequence is Deoxyguanosinetriphosphate triphosphohydrolase-like protein (365 aa).

Positions 52–187 (RLTHSIEVSQ…VDHADEIAYV (136 aa)) constitute an HD domain.

Belongs to the dGTPase family. Type 2 subfamily.

The polypeptide is Deoxyguanosinetriphosphate triphosphohydrolase-like protein (Wolinella succinogenes (strain ATCC 29543 / DSM 1740 / CCUG 13145 / JCM 31913 / LMG 7466 / NCTC 11488 / FDC 602W) (Vibrio succinogenes)).